The primary structure comprises 1001 residues: Ribonuclease E/G-like protein, chloroplastic (1001 aa).

The N-terminal 48 residues, 1–48 (MDVTEVPWRRLPQFSVSSRASWLVSSGFPLSSYMFSHVERGKTFRLTL), are a transit peptide targeting the chloroplast. The CBM20 domain occupies 76 to 185 (SRLKGLCEVV…KIIIRDSWMS (110 aa)). Position 755 (Asp755) interacts with Mg(2+). A coiled-coil region spans residues 769–789 (QEKAILEVNLAAARQIAREIR). A Mg(2+)-binding site is contributed by Asp800. Zn(2+) is bound by residues Cys858 and Cys861.

This sequence belongs to the RNase E/G family. As to quaternary structure, part of a chloroplastic degradosome-like complex. Interacts with RHON1. A homotetramer formed by a dimer of dimers. Mg(2+) is required as a cofactor. Zn(2+) serves as cofactor. Expressed in cotyledons, rosette and cauline leaves.

It is found in the plastid. Its subcellular location is the chloroplast stroma. Its function is as follows. Involved in intercistronic processing of primary transcripts from chloroplast operons. The endonucleolytic activity of the enzyme depends on the number of phosphates at the 5' end, is inhibited by structured RNA, and preferentially cleaves A/U-rich sequences. This chain is Ribonuclease E/G-like protein, chloroplastic (RNE), found in Arabidopsis thaliana (Mouse-ear cress).